We begin with the raw amino-acid sequence, 405 residues long: Phosphoglycerate kinase (405 aa).

Residues 24–26 (DFN), Arg-40, 63–66 (HLGR), Arg-122, and Arg-162 each bind substrate. ATP-binding positions include Lys-213, Glu-332, and 361–364 (GGDS).

This sequence belongs to the phosphoglycerate kinase family. Monomer.

Its subcellular location is the cytoplasm. The enzyme catalyses (2R)-3-phosphoglycerate + ATP = (2R)-3-phospho-glyceroyl phosphate + ADP. It functions in the pathway carbohydrate degradation; glycolysis; pyruvate from D-glyceraldehyde 3-phosphate: step 2/5. The sequence is that of Phosphoglycerate kinase from Corynebacterium diphtheriae (strain ATCC 700971 / NCTC 13129 / Biotype gravis).